An 885-amino-acid chain; its full sequence is Translation initiation factor IF-2 (885 aa).

Residues 1–295 (MTDNKDDKTI…EKFKRSQMQE (295 aa)) are disordered. The span at 63 to 77 (PVAAAPAAARPAEQR) shows a compositional bias: low complexity. Pro residues predominate over residues 78 to 94 (PMPPQPSGRPAPQPQPH). Residues 130–183 (RDAEEAKRRAEEEVRRRREEEERIAREKEEAARRAAEEAARPAVEAEKVEEKVE) are compositionally biased toward basic and acidic residues. Low complexity predominate over residues 184-201 (AATPAVAETRPLSERPAP). The 168-residue stretch at 383 to 550 (ARPPIVTIMG…AILLQSEILD (168 aa)) folds into the tr-type G domain. A G1 region spans residues 392 to 399 (GHVDHGKT). 392–399 (GHVDHGKT) serves as a coordination point for GTP. The tract at residues 417 to 421 (GITQH) is G2. Residues 438–441 (DTPG) are G3. GTP is bound by residues 438 to 442 (DTPGH) and 492 to 495 (NKID). The segment at 492-495 (NKID) is G4. Residues 528–530 (SAK) form a G5 region.

The protein belongs to the TRAFAC class translation factor GTPase superfamily. Classic translation factor GTPase family. IF-2 subfamily.

Its subcellular location is the cytoplasm. Functionally, one of the essential components for the initiation of protein synthesis. Protects formylmethionyl-tRNA from spontaneous hydrolysis and promotes its binding to the 30S ribosomal subunits. Also involved in the hydrolysis of GTP during the formation of the 70S ribosomal complex. The polypeptide is Translation initiation factor IF-2 (Sinorhizobium medicae (strain WSM419) (Ensifer medicae)).